The following is a 148-amino-acid chain: MALLCFNSLPSLSSLSSSSSSRLLQSPSFASPVLSLKPNAVESKNRVSLSAYSLNSSHGRIVVKAAASGVDGAEPESKEEPKTVVAAVPVDKLPLESKEAKEKLLLELRLKMKLAKKIRLRRKRLVRKRKMRKKGRWPPSKMKKNKNV.

Residues 1-65 constitute a chloroplast transit peptide; sequence MALLCFNSLP…SSHGRIVVKA (65 aa). Ala-66 is modified (N-acetylalanine). The segment at 125–148 is disordered; that stretch reads LVRKRKMRKKGRWPPSKMKKNKNV.

Belongs to the chloroplast-specific ribosomal protein cL37 family. As to quaternary structure, part of the 50S ribosomal subunit.

The protein localises to the plastid. It is found in the chloroplast. The polypeptide is Large ribosomal subunit protein cL37 (PSRP5) (Arabidopsis thaliana (Mouse-ear cress)).